The sequence spans 339 residues: Ribosomal RNA small subunit methyltransferase C (339 aa).

This sequence belongs to the methyltransferase superfamily. RsmC family. As to quaternary structure, monomer.

The protein resides in the cytoplasm. It carries out the reaction guanosine(1207) in 16S rRNA + S-adenosyl-L-methionine = N(2)-methylguanosine(1207) in 16S rRNA + S-adenosyl-L-homocysteine + H(+). Specifically methylates the guanine in position 1207 of 16S rRNA in the 30S particle. The chain is Ribosomal RNA small subunit methyltransferase C from Photobacterium profundum (strain SS9).